The chain runs to 192 residues: Cytidylate kinase (192 aa).

7-15 (GPAGSGKST) is an ATP binding site.

This sequence belongs to the cytidylate kinase family. Type 2 subfamily.

Its subcellular location is the cytoplasm. It catalyses the reaction CMP + ATP = CDP + ADP. It carries out the reaction dCMP + ATP = dCDP + ADP. This Natronomonas pharaonis (strain ATCC 35678 / DSM 2160 / CIP 103997 / JCM 8858 / NBRC 14720 / NCIMB 2260 / Gabara) (Halobacterium pharaonis) protein is Cytidylate kinase.